Reading from the N-terminus, the 234-residue chain is Transcription factor ILR3 (234 aa).

The segment at 34-85 (QPIGVSSNSSAGVDGSAGNSEASKEPGSKKRGRCESSSATSSKACREKQRRD) is disordered. Over residues 36–54 (IGVSSNSSAGVDGSAGNSE) the composition is skewed to polar residues. A bHLH domain is found at 71 to 122 (SATSSKACREKQRRDRLNDKFMELGAILEPGNPPKTDKAAILVDAVRMVTQL).

As to quaternary structure, homodimer. Interacts with BTS and BHLH47/PYE. Widely expressed throughout development, mostly in vasculatures.

The protein localises to the nucleus. Transcription factor. Plays a role in resistance to amide-linked indole-3-acetic acid (IAA) conjugates such as IAA-Leu and IAA-Phe. May regulate gene expression in response to metal homeostasis changes. The polypeptide is Transcription factor ILR3 (ILR3) (Arabidopsis thaliana (Mouse-ear cress)).